Consider the following 135-residue polypeptide: uncharacterized protein (135 aa).

Positions 2-71 (TYTTAKAAEK…LKDIKRFAEC (70 aa)) constitute an HTH merR-type domain. Residues 5-24 (TAKAAEKIGISAYTLRFYDK) constitute a DNA-binding region (H-T-H motif).

This is an uncharacterized protein from Haemophilus influenzae (strain ATCC 51907 / DSM 11121 / KW20 / Rd).